The primary structure comprises 473 residues: Photosystem II CP43 reaction center protein (473 aa).

The propeptide occupies 1–14 (MKTLYSLRRYYPVE). Threonine 15 bears the N-acetylthreonine mark. Threonine 15 carries the phosphothreonine modification. Helical transmembrane passes span 69-93 (LFEV…PHLA), 134-155 (LIGP…KDKN), 178-200 (KASF…REIT), 255-275 (KPFA…LSYS), and 291-312 (WFNN…ASQA). Residue glutamate 367 coordinates [CaMn4O5] cluster. Residues 447–471 (RARAAAAGFEKGIDRDSEPVLSMTP) form a helical membrane-spanning segment.

It belongs to the PsbB/PsbC family. PsbC subfamily. In terms of assembly, PSII is composed of 1 copy each of membrane proteins PsbA, PsbB, PsbC, PsbD, PsbE, PsbF, PsbH, PsbI, PsbJ, PsbK, PsbL, PsbM, PsbT, PsbX, PsbY, PsbZ, Psb30/Ycf12, at least 3 peripheral proteins of the oxygen-evolving complex and a large number of cofactors. It forms dimeric complexes. Binds multiple chlorophylls and provides some of the ligands for the Ca-4Mn-5O cluster of the oxygen-evolving complex. It may also provide a ligand for a Cl- that is required for oxygen evolution. PSII binds additional chlorophylls, carotenoids and specific lipids. is required as a cofactor.

The protein resides in the plastid. It is found in the chloroplast thylakoid membrane. One of the components of the core complex of photosystem II (PSII). It binds chlorophyll and helps catalyze the primary light-induced photochemical processes of PSII. PSII is a light-driven water:plastoquinone oxidoreductase, using light energy to abstract electrons from H(2)O, generating O(2) and a proton gradient subsequently used for ATP formation. The polypeptide is Photosystem II CP43 reaction center protein (Anthoceros angustus (Hornwort)).